Consider the following 370-residue polypeptide: tRNA-specific 2-thiouridylase MnmA (370 aa).

Residues 25–32 (ALSGGVDS) and Leu51 each bind ATP. Catalysis depends on Cys112, which acts as the Nucleophile. A disulfide bond links Cys112 and Cys211. Gly137 contributes to the ATP binding site. The segment at 161–163 (KDQ) is interaction with tRNA. The active-site Cysteine persulfide intermediate is Cys211. Residues 316–317 (RY) form an interaction with tRNA region.

This sequence belongs to the MnmA/TRMU family.

The protein resides in the cytoplasm. It catalyses the reaction S-sulfanyl-L-cysteinyl-[protein] + uridine(34) in tRNA + AH2 + ATP = 2-thiouridine(34) in tRNA + L-cysteinyl-[protein] + A + AMP + diphosphate + H(+). Its function is as follows. Catalyzes the 2-thiolation of uridine at the wobble position (U34) of tRNA, leading to the formation of s(2)U34. This chain is tRNA-specific 2-thiouridylase MnmA, found in Synechococcus sp. (strain JA-3-3Ab) (Cyanobacteria bacterium Yellowstone A-Prime).